The sequence spans 131 residues: Transcriptional activatory protein CaiF (131 aa).

Functionally, potential transcriptional activator of carnitine metabolism. The protein is Transcriptional activatory protein CaiF (caiF) of Escherichia coli (strain K12).